The chain runs to 370 residues: Putative agmatine deiminase (370 aa).

The Amidino-cysteine intermediate role is filled by C361.

It belongs to the agmatine deiminase family.

It catalyses the reaction agmatine + H2O = N-carbamoylputrescine + NH4(+). This is Putative agmatine deiminase from Shewanella sp. (strain MR-7).